A 165-amino-acid polypeptide reads, in one-letter code: UPF0254 protein MmarC5_0742 (165 aa).

Belongs to the UPF0254 family.

The chain is UPF0254 protein MmarC5_0742 from Methanococcus maripaludis (strain C5 / ATCC BAA-1333).